The chain runs to 93 residues: Large ribosomal subunit protein uL23 (93 aa).

The protein belongs to the universal ribosomal protein uL23 family. Part of the 50S ribosomal subunit. Contacts protein L29, and trigger factor when it is bound to the ribosome.

Its function is as follows. One of the early assembly proteins it binds 23S rRNA. One of the proteins that surrounds the polypeptide exit tunnel on the outside of the ribosome. Forms the main docking site for trigger factor binding to the ribosome. The chain is Large ribosomal subunit protein uL23 from Wolinella succinogenes (strain ATCC 29543 / DSM 1740 / CCUG 13145 / JCM 31913 / LMG 7466 / NCTC 11488 / FDC 602W) (Vibrio succinogenes).